A 109-amino-acid polypeptide reads, in one-letter code: ATP-dependent Clp protease adapter protein ClpS (109 aa).

The interval 1-20 (MAERKQGGQGNGVGSSVVTE) is disordered.

The protein belongs to the ClpS family. As to quaternary structure, binds to the N-terminal domain of the chaperone ClpA.

Involved in the modulation of the specificity of the ClpAP-mediated ATP-dependent protein degradation. This is ATP-dependent Clp protease adapter protein ClpS from Caulobacter vibrioides (strain NA1000 / CB15N) (Caulobacter crescentus).